Reading from the N-terminus, the 97-residue chain is Aspartyl/glutamyl-tRNA(Asn/Gln) amidotransferase subunit C (97 aa).

It belongs to the GatC family. In terms of assembly, heterotrimer of A, B and C subunits.

The catalysed reaction is L-glutamyl-tRNA(Gln) + L-glutamine + ATP + H2O = L-glutaminyl-tRNA(Gln) + L-glutamate + ADP + phosphate + H(+). It carries out the reaction L-aspartyl-tRNA(Asn) + L-glutamine + ATP + H2O = L-asparaginyl-tRNA(Asn) + L-glutamate + ADP + phosphate + 2 H(+). Its function is as follows. Allows the formation of correctly charged Asn-tRNA(Asn) or Gln-tRNA(Gln) through the transamidation of misacylated Asp-tRNA(Asn) or Glu-tRNA(Gln) in organisms which lack either or both of asparaginyl-tRNA or glutaminyl-tRNA synthetases. The reaction takes place in the presence of glutamine and ATP through an activated phospho-Asp-tRNA(Asn) or phospho-Glu-tRNA(Gln). This is Aspartyl/glutamyl-tRNA(Asn/Gln) amidotransferase subunit C from Listeria innocua serovar 6a (strain ATCC BAA-680 / CLIP 11262).